The chain runs to 107 residues: UPF0145 protein BT_3410 (107 aa).

The protein belongs to the UPF0145 family.

The sequence is that of UPF0145 protein BT_3410 from Bacteroides thetaiotaomicron (strain ATCC 29148 / DSM 2079 / JCM 5827 / CCUG 10774 / NCTC 10582 / VPI-5482 / E50).